Consider the following 396-residue polypeptide: Purine ribonucleoside efflux pump NepI (396 aa).

The Cytoplasmic portion of the chain corresponds to 1–21 (MSEFIAENRGADAITRPNWSA). A helical membrane pass occupies residues 22-42 (VFSVAFCVACLIIVEFLPVSL). The Periplasmic portion of the chain corresponds to 43–54 (LTPMAQDLGISE). A helical membrane pass occupies residues 55-75 (GVAGQSVTVTAFVAMFASLFI). Residues 76–85 (TQTIQATDRR) are Cytoplasmic-facing. The helical transmembrane segment at 86–106 (YVVILFAVLLTLSCLLVSFAN) threads the bilayer. Position 107 (S107) is a topological domain, periplasmic. The chain crosses the membrane as a helical span at residues 108–128 (FSLLLIGRACLGLALGGFWAM). Residues 129 to 147 (SASLTMRLVPPRTVPKALS) lie on the Cytoplasmic side of the membrane. Residues 148–168 (VIFGAVSIALVIAAPLGSFLG) form a helical membrane-spanning segment. Over 169–175 (ELIGWRN) the chain is Periplasmic. Residues 176-196 (VFNAAAVMGVLCIFWIIKSLP) form a helical membrane-spanning segment. Residues 197-215 (SLPGEPSHQKQNTFRLLQR) lie on the Cytoplasmic side of the membrane. Residues 216–236 (PGVMAGMIAIFMSFAGQFAFF) traverse the membrane as a helical segment. The Periplasmic portion of the chain corresponds to 237 to 255 (TYIRPVYMNLAGFGVDGLT). A helical transmembrane segment spans residues 256–276 (LVLLSFGIASFIGTSLSSFIL). Topologically, residues 277–281 (KRSVK) are cytoplasmic. Residues 282 to 302 (LALAGAPLILAVSALVLTLWG) form a helical membrane-spanning segment. The Periplasmic portion of the chain corresponds to 303–305 (SDK). The helical transmembrane segment at 306–326 (IVATGVAIIWGLTFALVPVGW) threads the bilayer. The Cytoplasmic segment spans residues 327–343 (STWITRSLADQAEKAGS). The chain crosses the membrane as a helical span at residues 344-364 (IQVAVIQLANTCGAAIGGYAL). At 365-366 (DN) the chain is on the periplasmic side. A helical membrane pass occupies residues 367–387 (IGLTSPLMLSGTLMLLTALLV). At 388–396 (TAKVKMKKS) the chain is on the cytoplasmic side.

Belongs to the major facilitator superfamily. DHA1 family. NepI (TC 2.A.1.2.26) subfamily.

The protein localises to the cell inner membrane. The enzyme catalyses inosine(in) + H(+)(out) = inosine(out) + H(+)(in). It catalyses the reaction guanosine(in) + H(+)(out) = guanosine(out) + H(+)(in). Involved in the efflux of purine ribonucleosides, such as inosine and guanosine. This Shigella flexneri protein is Purine ribonucleoside efflux pump NepI.